The following is a 222-amino-acid chain: MSSLSKEAVLVHEALVARGLETPMRAPVQEIDNETRKRLITGHMTEIMQLLNLDLSDDSLMETPHRIAKMYVDEIFSGLDYSRFPKITVIENKMKVDEMVTVRDITLTSTCEHHFVTIDGKATVAYIPKDSVIGLSKINRIVQFFAQRPQVQERLTQQILIALQTLLGTNNVAVSIDAVHYCVKARGIRDATSATTTTSLGGLFKSSQNTRQEFLRAVRHHD.

Residues C111, H114, and C182 each coordinate Zn(2+).

The protein belongs to the GTP cyclohydrolase I family. In terms of assembly, toroid-shaped homodecamer, composed of two pentamers of five dimers.

It carries out the reaction GTP + H2O = 7,8-dihydroneopterin 3'-triphosphate + formate + H(+). It functions in the pathway cofactor biosynthesis; 7,8-dihydroneopterin triphosphate biosynthesis; 7,8-dihydroneopterin triphosphate from GTP: step 1/1. This chain is GTP cyclohydrolase 1, found in Klebsiella pneumoniae subsp. pneumoniae (strain ATCC 700721 / MGH 78578).